The chain runs to 386 residues: O-phospho-L-seryl-tRNA:Cys-tRNA synthase (386 aa).

Pyridoxal 5'-phosphate contacts are provided by residues 89-90, Asn-196, and 219-221; these read AR and SGH. Position 222 is an N6-(pyridoxal phosphate)lysine (Lys-222).

Belongs to the SepCysS family. Homodimer. Interacts with SepRS. It depends on pyridoxal 5'-phosphate as a cofactor.

It carries out the reaction O-phospho-L-seryl-tRNA(Cys) + hydrogen sulfide + H(+) = L-cysteinyl-tRNA(Cys) + phosphate. In terms of biological role, converts O-phospho-L-seryl-tRNA(Cys) (Sep-tRNA(Cys)) to L-cysteinyl-tRNA(Cys) (Cys-tRNA(Cys)). The protein is O-phospho-L-seryl-tRNA:Cys-tRNA synthase of Methanosarcina acetivorans (strain ATCC 35395 / DSM 2834 / JCM 12185 / C2A).